The following is a 130-amino-acid chain: Anti-adapter protein IraD (130 aa).

This sequence belongs to the GpW/Gp25 family. IraD subfamily. In terms of assembly, interacts with RssB.

It is found in the cytoplasm. Inhibits RpoS proteolysis by regulating RssB activity, thereby increasing the stability of the sigma stress factor RpoS during oxidative stress. Its effect on RpoS stability is due to its interaction with RssB, which probably blocks the interaction of RssB with RpoS, and the consequent delivery of the RssB-RpoS complex to the ClpXP protein degradation pathway. This is Anti-adapter protein IraD from Escherichia coli O7:K1 (strain IAI39 / ExPEC).